The chain runs to 659 residues: Alpha-amylase (659 aa).

The first 27 residues, 1-27, serve as a signal peptide directing secretion; the sequence is MFAKRFKTSLLPLFAGFLLLFHLVLAG. A propeptide spanning residues 28–41 is cleaved from the precursor; that stretch reads PAAASAETANKSNE. The Ca(2+) site is built by Asn-142, Thr-178, Asp-187, Gly-210, and Asp-212. Catalysis depends on Asp-217, which acts as the Nucleophile. His-221 lines the Ca(2+) pocket. Glu-249 functions as the Proton donor in the catalytic mechanism.

The protein belongs to the glycosyl hydrolase 13 family. As to quaternary structure, monomer. Ca(2+) serves as cofactor.

It localises to the secreted. It catalyses the reaction Endohydrolysis of (1-&gt;4)-alpha-D-glucosidic linkages in polysaccharides containing three or more (1-&gt;4)-alpha-linked D-glucose units.. The polypeptide is Alpha-amylase (amyE) (Bacillus subtilis (strain 168)).